Reading from the N-terminus, the 119-residue chain is Immunoglobulin heavy variable 3-72 (119 aa).

A signal peptide spans 1–19 (MEFGLSWVFLVVILQGVQC). The framework-1 stretch occupies residues 20–44 (EVQLVESGGGLVQPGGSLRLSCAAS). The Ig-like domain occupies 20 to 119 (EVQLVESGGG…EDTAVYYCAR (100 aa)). A disulfide bond links Cys41 and Cys117. Positions 45–52 (GFTFSDHY) are complementarity-determining-1. Residues 53 to 69 (MDWVRQAPGKGLEWVGR) are framework-2. The complementarity-determining-2 stretch occupies residues 70-79 (TRNKANSYTT). The tract at residues 80–117 (EYAASVKGRFTISRDDSKNSLYLQMNSLKTEDTAVYYC) is framework-3. Residues 118–119 (AR) form a complementarity-determining-3 region.

In terms of assembly, immunoglobulins are composed of two identical heavy chains and two identical light chains; disulfide-linked.

It is found in the secreted. The protein localises to the cell membrane. Functionally, v region of the variable domain of immunoglobulin heavy chains that participates in the antigen recognition. Immunoglobulins, also known as antibodies, are membrane-bound or secreted glycoproteins produced by B lymphocytes. In the recognition phase of humoral immunity, the membrane-bound immunoglobulins serve as receptors which, upon binding of a specific antigen, trigger the clonal expansion and differentiation of B lymphocytes into immunoglobulins-secreting plasma cells. Secreted immunoglobulins mediate the effector phase of humoral immunity, which results in the elimination of bound antigens. The antigen binding site is formed by the variable domain of one heavy chain, together with that of its associated light chain. Thus, each immunoglobulin has two antigen binding sites with remarkable affinity for a particular antigen. The variable domains are assembled by a process called V-(D)-J rearrangement and can then be subjected to somatic hypermutations which, after exposure to antigen and selection, allow affinity maturation for a particular antigen. The sequence is that of Immunoglobulin heavy variable 3-72 from Homo sapiens (Human).